The chain runs to 751 residues: Serine/threonine-protein kinase B-raf (751 aa).

Positions 1–32 are enriched in gly residues; the sequence is MAALSGGGGSSSGGGGGGGGGGGGGDGGGGAE. The interval 1–55 is disordered; the sequence is MAALSGGGGSSSGGGGGGGGGGGGGDGGGGAEQGQALFNGDMEPEAGAGAAASSA. N-acetylalanine is present on alanine 2. Low complexity predominate over residues 46–55; that stretch reads AGAGAAASSA. Phosphoserine is present on serine 135. The 73-residue stretch at 139–211 folds into the RBD domain; that stretch reads PIVRVFLPNK…TGEELHVEVL (73 aa). Zn(2+)-binding residues include histidine 219, cysteine 232, cysteine 235, cysteine 245, cysteine 248, histidine 253, cysteine 256, and cysteine 264. Residues 288-440 form a disordered region; that stretch reads EASFPETALP…SSDDWEIPDG (153 aa). Residues 297–324 show a composition bias toward low complexity; sequence PSGSSSAPPSDSTGPQILTSPSPSKSIP. The residue at position 316 (serine 316) is a Phosphoserine. Residues 331–346 show a composition bias toward basic and acidic residues; sequence PADEDHRNQFGQRDRS. At serine 348 the chain carries Phosphoserine. Threonine 356 is modified (phosphothreonine; by autocatalysis). At threonine 379 the chain carries Phosphothreonine. Serine 382 carries the phosphoserine modification. Threonine 384 is subject to Phosphothreonine. Residues 406–432 show a composition bias toward basic and acidic residues; the sequence is QRERKSSSSSSSEDRSRMKTLGRRDSS. Phosphoserine is present on residues serine 431 and serine 432. One can recognise a Protein kinase domain in the interval 442-702; it reads ITVGQRIGSG…PQILASIELL (261 aa). ATP-binding positions include 448 to 456 and lysine 468; that span reads IGSGSFGTV. Aspartate 561 serves as the catalytic Proton acceptor. Residue lysine 563 forms a Glycyl lysine isopeptide (Lys-Gly) (interchain with G-Cter in ubiquitin) linkage. Position 656 is an omega-N-methylarginine; by PRMT5 (arginine 656). Serine 714 and serine 735 each carry phosphoserine. The residue at position 738 (threonine 738) is a Phosphothreonine; by MAPK1.

The protein belongs to the protein kinase superfamily. TKL Ser/Thr protein kinase family. RAF subfamily. In terms of assembly, monomer. Homodimer. Heterodimerizes with RAF1, and the heterodimer possesses a highly increased kinase activity compared to the respective homodimers or monomers. Heterodimerization is mitogen-regulated and enhanced by 14-3-3 proteins. MAPK1/ERK2 activation can induce a negative feedback that promotes the dissociation of the heterodimer by phosphorylating BRAF at Thr-738. Heterodimerizes (via N-terminus) with KSR1 (via N-terminus) or KSR2 (via N-terminus) in a MAP2K1-dependent manner. Interacts with MAP2K1 and MAP2K2. Found in a complex with at least BRAF, HRAS, MAP2K1, MAPK3 and RGS14. Interacts with RIT1. Interacts (via N-terminus) with RGS14 (via RBD domains); the interaction mediates the formation of a ternary complex with RAF1, a ternary complex inhibited by GNAI1. Interacts with DGKH. Interacts with PRMT5. Interacts with AKAP13, MAP2K1 and KSR1. Identified in a complex with AKAP13, KSR1 and MAP2K1. Interacts with FNIP1 and FNIP2. The cofactor is Zn(2+). In terms of processing, phosphorylation at Ser-348 by SGK1 inhibits its activity. Dephosphorylation of Ser-348 by the SHOC2-MRAS-PP1c (SMP) complex consisting of SHOC2, GTP-bound M-Ras/MRAS and the catalytic subunit of protein phosphatase 1 (PPP1CA, PPP1CB or PPP1CC); this relieves inactivation and stimulates kinase activity. Post-translationally, methylation by PRMT5 decreases stability and kinase activity. Ubiquitinated by RNF149; which leads to proteasomal degradation. Polyubiquitinated at Lys-615 in response to EGF.

Its subcellular location is the nucleus. The protein resides in the cytoplasm. It is found in the cell membrane. The catalysed reaction is L-seryl-[protein] + ATP = O-phospho-L-seryl-[protein] + ADP + H(+). It catalyses the reaction L-threonyl-[protein] + ATP = O-phospho-L-threonyl-[protein] + ADP + H(+). Its activity is regulated as follows. In quiescent cells, maintained in an inactive state via an intramolecular interaction between the protein kinase and N-terminal domains. Following mitogen-mediated cell activation, binds via its RGB domain to active HRAS (GTP-bound) which releases the inhibitory intramolecular interaction between the two domains. This allows the MAP2K1-mediated dimerization of KSR1 or KSR2, and BRAF which activates BRAF. In terms of biological role, involved in the transduction of mitogenic signals from the cell membrane to the nucleus. Phosphorylates MAP2K1, and thereby activates the MAP kinase signal transduction pathway. Phosphorylates PFKFB2. May play a role in the postsynaptic responses of hippocampal neurons. The protein is Serine/threonine-protein kinase B-raf of Mus musculus (Mouse).